The primary structure comprises 92 residues: Putative regulatory protein CA_C1717 (92 aa).

This sequence belongs to the RemA family.

This is Putative regulatory protein CA_C1717 from Clostridium acetobutylicum (strain ATCC 824 / DSM 792 / JCM 1419 / IAM 19013 / LMG 5710 / NBRC 13948 / NRRL B-527 / VKM B-1787 / 2291 / W).